We begin with the raw amino-acid sequence, 66 residues long: Large ribosomal subunit protein bL35 (66 aa).

Belongs to the bacterial ribosomal protein bL35 family.

The polypeptide is Large ribosomal subunit protein bL35 (Beijerinckia indica subsp. indica (strain ATCC 9039 / DSM 1715 / NCIMB 8712)).